Here is a 59-residue protein sequence, read N- to C-terminus: Large ribosomal subunit protein uL30 (59 aa).

The protein belongs to the universal ribosomal protein uL30 family. Part of the 50S ribosomal subunit.

The chain is Large ribosomal subunit protein uL30 from Enterobacter sp. (strain 638).